The primary structure comprises 467 residues: MTEVFTIKQCLDGEISIDETVTVRGWVKTRRDSKAGLSFISLHDGSCFSPIQIVATDQLSNYHKEVTKLTAGCSMVATGKLVASQGKGQFFEIQAESIEVVGWVENPDTYPIQAKRHTLEFLREVAHLRPRTNTISAVTRVRHSLAQAIHRFYHEQGFFWVHTPIITASDCEGAGEMFRVSTLDLLNIPKNDKGQIDFSKDFFGRETFLTVSGQLNVEAYCMAMSKVYTFGPTFRAENSNTSRHLAEFWMIEPEIAFANLEDICKLSQSMLRYLCKTVLEERADDMDFFNQFVAPGCIERMEHIADSEFEMMTYTDAIKALEASDQKFEFPVSWGLDLQSEHERYLAEVLCKKPVIVTNYPQEIKGFYMRLNDDGKTVAAMDVLAPGIGEIIGGSQREERLEILDRRMDECNLNKEHYQWYRDLRRYGTVPHAGFGLGFERLISYVTGVSNVRDVIPFPRTPGHADY.

The protein belongs to the class-II aminoacyl-tRNA synthetase family. In terms of assembly, homodimer.

It localises to the cytoplasm. It catalyses the reaction tRNA(Asn) + L-asparagine + ATP = L-asparaginyl-tRNA(Asn) + AMP + diphosphate + H(+). In Legionella pneumophila (strain Corby), this protein is Asparagine--tRNA ligase.